A 923-amino-acid chain; its full sequence is DNA mismatch repair protein PMS1 (923 aa).

Composition is skewed to basic and acidic residues over residues 543–553 (DMTPSERDSEL), 565–581 (NVER…RFEE), and 591–601 (GDVERVSEDNP). Positions 543-603 (DMTPSERDSE…ERVSEDNPRC (61 aa)) are disordered.

The protein belongs to the DNA mismatch repair MutL/HexB family. As to quaternary structure, heterodimer of MLH1 and PMS1, called MutLalpha, which is the major MMR MutL activity correcting base-base mismatches as well as IDLs. The heterodimer binds double strand DNA independently of a mismatch with positive cooperativity and has more than one DNA binding site. Forms a ternary complex with either the MSH2-MSH6 (MutSalpha) or the MSH2-MSH3 heterodimer (MutSbeta), which recognize and bind to mismatch DNA. Ternary complex formation is promoted by ATP binding. Expressed at very low levels in mature leaves. Detected in rapidly dividing tissues.

The protein resides in the nucleus. Functionally, required for DNA mismatch repair (MMR), correcting base-base mismatches and insertion-deletion loops (IDLs) resulting from DNA replication, DNA damage or from recombination events between non-identical sequences during meiosis. Component of the MutLalpha heterodimer that forms a ternary complex with the MutS heterodimers, which initially recognize the DNA mismatches. This complex is thought to be responsible for directing the downstream MMR events, including strand discrimination, excision, and resynthesis. Plays a major role in maintaining the genetic stability of simple sequence repeats and in the repair of heteroduplex sites present in meiotic recombination intermediates. Does not seem to be required for homologous somatic recombination. The protein is DNA mismatch repair protein PMS1 (PMS1) of Arabidopsis thaliana (Mouse-ear cress).